Here is a 236-residue protein sequence, read N- to C-terminus: Orotidine 5'-phosphate decarboxylase (236 aa).

Residues Asp-14, Lys-36, 63–72 (DLKFHDIPNT), Thr-123, Arg-184, Gln-193, Gly-213, and Arg-214 contribute to the substrate site. Lys-65 serves as the catalytic Proton donor.

It belongs to the OMP decarboxylase family. Type 1 subfamily. Homodimer.

It carries out the reaction orotidine 5'-phosphate + H(+) = UMP + CO2. The protein operates within pyrimidine metabolism; UMP biosynthesis via de novo pathway; UMP from orotate: step 2/2. Functionally, catalyzes the decarboxylation of orotidine 5'-monophosphate (OMP) to uridine 5'-monophosphate (UMP). This Marinobacter nauticus (strain ATCC 700491 / DSM 11845 / VT8) (Marinobacter aquaeolei) protein is Orotidine 5'-phosphate decarboxylase.